The sequence spans 1215 residues: Endoplasmic reticulum transmembrane helix translocase (1215 aa).

Over 1-27 the chain is Cytoplasmic; sequence MTKKSFVSSPIVRDSTLLVPKSLIAKP. The helical transmembrane segment at 28 to 43 threads the bilayer; it reads YVLPFFPLYATFAQLY. Over 44 to 56 the chain is Lumenal; the sequence is FQQYDRYIKGPEW. Residues 57–76 form a helical membrane-spanning segment; sequence TFVYLGTLVSLNILVMLMPA. The Cytoplasmic portion of the chain corresponds to 77–188; it reads WNVKIKAKFN…ENSFDIPIPT (112 aa). The A-domain; part 1 stretch occupies residues 156–185; sequence KIGDFQKCKGHSGDLTHLKRLYGENSFDIP. Residues 189–216 traverse the membrane as a helical segment; that stretch reads FMELFKEHAVAPLFVFQVFCVALWLLDE. A topological domain (lumenal) is located at residue phenylalanine 217. A helical membrane pass occupies residues 218–246; sequence WYYSLFNLFMIISMEAAAVFQRLTALKEF. At 247-395 the chain is on the cytoplasmic side; that stretch reads RTMGIKPYTI…IYSAERVSVD (149 aa). An A-domain; part 2 region spans residues 250 to 390; the sequence is GIKPYTINVF…LVRVMIYSAE (141 aa). Serine 324 carries the phosphoserine modification. The chain crosses the membrane as a helical span at residues 396–425; the sequence is NKEALMFILFLLIFAVIASWYVWVEGTKMG. Topologically, residues 426–427 are lumenal; sequence RI. The next 2 membrane-spanning stretches (helical) occupy residues 428–442 and 446–464; these read QSKL…ITSV and ELPM…ALAK. At 465–971 the chain is on the cytoplasmic side; the sequence is FYVYCTEPFR…APFTSKLANV (507 aa). The interval 466–495 is P-domain; part 1; it reads YVYCTEPFRIPFAGRIDVCCFDKTGTLTGE. The active-site 4-aspartylphosphate intermediate is aspartate 487. Positions 487 and 489 each coordinate Mg(2+). Residues 487–489, phenylalanine 582, arginine 634, aspartate 699, and 816–820 each bind ATP; these read DKT and DGTND. Residues 497–674 form an N-domain region; it reads LVFEGLAGIS…FNGFLIFHCP (178 aa). Residues 677–837 form a P-domain; part 2 region; the sequence is DDAIETIKML…HVGIALLNGT (161 aa). Position 816 (aspartate 816) interacts with Mg(2+). Positions 838–953 are arm-like; sequence EEGLKKLGEQ…DAQGDEAPAL (116 aa). Position 936 is a phosphoserine (serine 936). Positions 954 to 969 are P-domain; part 3; it reads KLGDASCAAPFTSKLA. Residues 972-1011 form a helical membrane-spanning segment; that stretch reads SAVTNIIRQGRCALVNTIQMYKILALNCLISAYSLSIIYM. Residues 1012 to 1017 are Lumenal-facing; the sequence is AGVKFG. A helical transmembrane segment spans residues 1018-1035; it reads DGQATVSGLLLSVCFLSI. Topologically, residues 1036–1055 are cytoplasmic; that stretch reads SRGKPLEKLSKQRPQSGIFN. Residues 1056–1084 form a helical membrane-spanning segment; the sequence is VYIMGSILSQFAVHIATLVYITTEIYKLE. The Lumenal portion of the chain corresponds to 1085–1099; that stretch reads PREPQVDLEKEFAPS. A helical membrane pass occupies residues 1100–1121; that stretch reads LLNTGIFIIQLVQQVSTFAVNY. Residues 1122-1133 are Cytoplasmic-facing; that stretch reads QGEPFRENIRSN. A helical membrane pass occupies residues 1134-1151; sequence KGMYYGLLGVTGLALASA. Over 1152–1168 the chain is Lumenal; it reads TEFLPELNEAMKFVPMT. The chain crosses the membrane as a helical span at residues 1169–1197; the sequence is DDFKIKLTLTLLLDFFGSWGVEHFFKFFF. Residues 1198–1215 lie on the Cytoplasmic side of the membrane; it reads MDDKPSDISVQQVKIASK.

It belongs to the cation transport ATPase (P-type) (TC 3.A.3) family. Type V subfamily. The cofactor is Mg(2+).

It localises to the endoplasmic reticulum membrane. The catalysed reaction is [protein]-with a C-terminal TM segment(out) + ATP + H2O = [protein]-with a C-terminal TM segment(in) + ADP + phosphate + H(+). With respect to regulation, the ATPase activity is stimulated by phosphatidylinositol 4-phosphate (PI4P). In terms of biological role, endoplasmic reticulum translocase required to remove mitochondrial transmembrane proteins mistargeted to the endoplasmic reticulum. Acts as a dislocase that mediates the ATP-dependent extraction of mislocalized mitochondrial transmembrane proteins from the endoplasmic reticulum membrane. Specifically binds mitochondrial tail-anchored transmembrane proteins: has an atypically large substrate-binding pocket that recognizes and binds moderately hydrophobic transmembranes with short hydrophilic lumenal domains. The polypeptide is Endoplasmic reticulum transmembrane helix translocase (Saccharomyces cerevisiae (strain ATCC 204508 / S288c) (Baker's yeast)).